We begin with the raw amino-acid sequence, 357 residues long: UDP-N-acetylglucosamine--N-acetylmuramyl-(pentapeptide) pyrophosphoryl-undecaprenol N-acetylglucosamine transferase (357 aa).

UDP-N-acetyl-alpha-D-glucosamine contacts are provided by residues 12–14 (TGG), N124, R163, S189, I243, 262–267 (ALTVSE), and Q288.

Belongs to the glycosyltransferase 28 family. MurG subfamily.

Its subcellular location is the cell inner membrane. The catalysed reaction is di-trans,octa-cis-undecaprenyl diphospho-N-acetyl-alpha-D-muramoyl-L-alanyl-D-glutamyl-meso-2,6-diaminopimeloyl-D-alanyl-D-alanine + UDP-N-acetyl-alpha-D-glucosamine = di-trans,octa-cis-undecaprenyl diphospho-[N-acetyl-alpha-D-glucosaminyl-(1-&gt;4)]-N-acetyl-alpha-D-muramoyl-L-alanyl-D-glutamyl-meso-2,6-diaminopimeloyl-D-alanyl-D-alanine + UDP + H(+). Its pathway is cell wall biogenesis; peptidoglycan biosynthesis. Its function is as follows. Cell wall formation. Catalyzes the transfer of a GlcNAc subunit on undecaprenyl-pyrophosphoryl-MurNAc-pentapeptide (lipid intermediate I) to form undecaprenyl-pyrophosphoryl-MurNAc-(pentapeptide)GlcNAc (lipid intermediate II). This Pseudomonas aeruginosa (strain LESB58) protein is UDP-N-acetylglucosamine--N-acetylmuramyl-(pentapeptide) pyrophosphoryl-undecaprenol N-acetylglucosamine transferase.